The following is a 702-amino-acid chain: Polyribonucleotide nucleotidyltransferase (702 aa).

D485 and D491 together coordinate Mg(2+). One can recognise a KH domain in the interval 552–611; sequence PKTSTLQIDPEKIRDVIGAGGKVINKIIADTGVKIDIKEDGLVYVSSAESEGVKEAVKII. The 69-residue stretch at 621–689 folds into the S1 motif domain; it reads GEIYLGKVTK…SQGRINLSRK (69 aa).

Belongs to the polyribonucleotide nucleotidyltransferase family. It depends on Mg(2+) as a cofactor.

Its subcellular location is the cytoplasm. The catalysed reaction is RNA(n+1) + phosphate = RNA(n) + a ribonucleoside 5'-diphosphate. In terms of biological role, involved in mRNA degradation. Catalyzes the phosphorolysis of single-stranded polyribonucleotides processively in the 3'- to 5'-direction. This chain is Polyribonucleotide nucleotidyltransferase, found in Clostridium perfringens (strain 13 / Type A).